We begin with the raw amino-acid sequence, 188 residues long: MSLISRLRAVVAGDDYLDGELDDFAYEDEQQDQDQRATQADGGALATLGDSNPFDLGGDLPGSNVIGMPGISTAAAEVNLMEPRSFDEMPRAIQALRERKTVILNLTMMEPDQAQRAVDFVAGGTFAIDGHQERVGESIFLFAPSCVTVTNASQDETSAPTVVSREIDVAEPSESASAPSPAWGAAAL.

Positions 29-53 are disordered; it reads EQQDQDQRATQADGGALATLGDSNP.

Belongs to the SepF family. As to quaternary structure, homodimer. Interacts with FtsZ.

The protein localises to the cytoplasm. In terms of biological role, cell division protein that is part of the divisome complex and is recruited early to the Z-ring. Probably stimulates Z-ring formation, perhaps through the cross-linking of FtsZ protofilaments. Its function overlaps with FtsA. This is Cell division protein SepF from Synechococcus sp. (strain CC9902).